Reading from the N-terminus, the 114-residue chain is Iron-sulfur cluster insertion protein ErpA (114 aa).

Iron-sulfur cluster is bound by residues cysteine 42, cysteine 106, and cysteine 108.

It belongs to the HesB/IscA family. As to quaternary structure, homodimer. Requires iron-sulfur cluster as cofactor.

Its function is as follows. Required for insertion of 4Fe-4S clusters for at least IspG. This chain is Iron-sulfur cluster insertion protein ErpA, found in Haemophilus ducreyi (strain 35000HP / ATCC 700724).